A 171-amino-acid chain; its full sequence is Nicotinamide-nucleotide adenylyltransferase (171 aa).

Belongs to the archaeal NMN adenylyltransferase family.

The protein resides in the cytoplasm. It catalyses the reaction beta-nicotinamide D-ribonucleotide + ATP + H(+) = diphosphate + NAD(+). Its pathway is cofactor biosynthesis; NAD(+) biosynthesis; NAD(+) from nicotinamide D-ribonucleotide: step 1/1. This Ignicoccus hospitalis (strain KIN4/I / DSM 18386 / JCM 14125) protein is Nicotinamide-nucleotide adenylyltransferase.